The sequence spans 403 residues: 26S proteasome regulatory subunit 8 (403 aa).

ATP is bound at residue 186 to 193; that stretch reads GPPGTGKT.

Belongs to the AAA ATPase family.

Its subcellular location is the cytoplasm. The protein localises to the nucleus. The 26S proteasome is involved in the ATP-dependent degradation of ubiquitinated proteins. The regulatory (or ATPase) complex confers ATP dependency and substrate specificity to the 26S complex. In Dictyostelium discoideum (Social amoeba), this protein is 26S proteasome regulatory subunit 8 (psmC5).